We begin with the raw amino-acid sequence, 459 residues long: tRNA modification GTPase MnmE (459 aa).

Residues Arg-29, Glu-91, and Arg-130 each contribute to the (6S)-5-formyl-5,6,7,8-tetrahydrofolate site. One can recognise a TrmE-type G domain in the interval 225-381; sequence GVKVAIVGRP…LEEALEQLVT (157 aa). A K(+)-binding site is contributed by Asn-235. GTP-binding positions include 235-240, 254-260, and 279-282; these read NVGKSS, TDLPGTT, and DTAG. Ser-239 serves as a coordination point for Mg(2+). 3 residues coordinate K(+): Thr-254, Leu-256, and Thr-259. Thr-260 contacts Mg(2+). Lys-459 lines the (6S)-5-formyl-5,6,7,8-tetrahydrofolate pocket.

This sequence belongs to the TRAFAC class TrmE-Era-EngA-EngB-Septin-like GTPase superfamily. TrmE GTPase family. In terms of assembly, homodimer. Heterotetramer of two MnmE and two MnmG subunits. K(+) serves as cofactor.

The protein localises to the cytoplasm. Functionally, exhibits a very high intrinsic GTPase hydrolysis rate. Involved in the addition of a carboxymethylaminomethyl (cmnm) group at the wobble position (U34) of certain tRNAs, forming tRNA-cmnm(5)s(2)U34. This chain is tRNA modification GTPase MnmE, found in Synechococcus sp. (strain JA-2-3B'a(2-13)) (Cyanobacteria bacterium Yellowstone B-Prime).